The primary structure comprises 343 residues: Anthranilate phosphoribosyltransferase (343 aa).

Residues Gly-84, 87-88, Thr-92, 94-97, 112-120, and Ser-124 contribute to the 5-phospho-alpha-D-ribose 1-diphosphate site; these read GD, NIST, and KHGNRSASS. Residue Gly-84 participates in anthranilate binding. Ser-96 is a binding site for Mg(2+). Anthranilate is bound at residue Asn-115. Arg-170 contacts anthranilate. Mg(2+)-binding residues include Asp-229 and Glu-230.

This sequence belongs to the anthranilate phosphoribosyltransferase family. In terms of assembly, homodimer. Mg(2+) is required as a cofactor.

The catalysed reaction is N-(5-phospho-beta-D-ribosyl)anthranilate + diphosphate = 5-phospho-alpha-D-ribose 1-diphosphate + anthranilate. It participates in amino-acid biosynthesis; L-tryptophan biosynthesis; L-tryptophan from chorismate: step 2/5. Its function is as follows. Catalyzes the transfer of the phosphoribosyl group of 5-phosphorylribose-1-pyrophosphate (PRPP) to anthranilate to yield N-(5'-phosphoribosyl)-anthranilate (PRA). This Bordetella avium (strain 197N) protein is Anthranilate phosphoribosyltransferase.